The sequence spans 660 residues: GTP-binding protein BRASSINAZOLE INSENSITIVE PALE GREEN 2, chloroplastic (660 aa).

The N-terminal 53 residues, 1-53, are a transit peptide targeting the chloroplast; it reads MVVLISSTVTICNVKPKLEDGNFRVSRLIHRPEVPFFSGLSNEKKKKCAVSVM. Disordered stretches follow at residues 127 to 158 and 191 to 212; these read EGDEHVENDELAGFEMVDDDADEEEEGEDDEM and NDVELDGFAPAGVGYGNVTEEK. Over residues 130–158 the composition is skewed to acidic residues; that stretch reads EHVENDELAGFEMVDDDADEEEEGEDDEM. A CP-type G domain is found at 273–457; it reads STRLIKPMSN…MYDTPGLLHP (185 aa).

It belongs to the TRAFAC class YlqF/YawG GTPase family. As to quaternary structure, binds to chloroplast 16S and 23S ribosomal RNAs. In terms of tissue distribution, mostly expressed in stems, petioles, leaves and flowers and, at low levels, also in roots.

It localises to the plastid. Its subcellular location is the chloroplast stroma. Required for brassinosteroid- (BR) mediated post-transcriptional and translational regulation in the chloroplast, including accumulation of chloroplast rRNA. Involved in chloroplast differentiation. This is GTP-binding protein BRASSINAZOLE INSENSITIVE PALE GREEN 2, chloroplastic from Arabidopsis thaliana (Mouse-ear cress).